A 230-amino-acid polypeptide reads, in one-letter code: Demethylmenaquinone methyltransferase (230 aa).

S-adenosyl-L-methionine contacts are provided by residues threonine 62, aspartate 80, 100–101 (DA), and serine 117.

The protein belongs to the class I-like SAM-binding methyltransferase superfamily. MenG/UbiE family.

The catalysed reaction is a 2-demethylmenaquinol + S-adenosyl-L-methionine = a menaquinol + S-adenosyl-L-homocysteine + H(+). The protein operates within quinol/quinone metabolism; menaquinone biosynthesis; menaquinol from 1,4-dihydroxy-2-naphthoate: step 2/2. Methyltransferase required for the conversion of demethylmenaquinol (DMKH2) to menaquinol (MKH2). The chain is Demethylmenaquinone methyltransferase from Mycolicibacterium paratuberculosis (strain ATCC BAA-968 / K-10) (Mycobacterium paratuberculosis).